A 305-amino-acid chain; its full sequence is UDP-3-O-acyl-N-acetylglucosamine deacetylase (305 aa).

Histidine 79, histidine 238, and aspartate 242 together coordinate Zn(2+). The active-site Proton donor is the histidine 265.

The protein belongs to the LpxC family. Zn(2+) is required as a cofactor.

It carries out the reaction a UDP-3-O-[(3R)-3-hydroxyacyl]-N-acetyl-alpha-D-glucosamine + H2O = a UDP-3-O-[(3R)-3-hydroxyacyl]-alpha-D-glucosamine + acetate. Its pathway is glycolipid biosynthesis; lipid IV(A) biosynthesis; lipid IV(A) from (3R)-3-hydroxytetradecanoyl-[acyl-carrier-protein] and UDP-N-acetyl-alpha-D-glucosamine: step 2/6. Functionally, catalyzes the hydrolysis of UDP-3-O-myristoyl-N-acetylglucosamine to form UDP-3-O-myristoylglucosamine and acetate, the committed step in lipid A biosynthesis. The protein is UDP-3-O-acyl-N-acetylglucosamine deacetylase of Actinobacillus succinogenes (strain ATCC 55618 / DSM 22257 / CCUG 43843 / 130Z).